The primary structure comprises 158 residues: Placenta growth factor (158 aa).

A signal peptide spans 1-18 (MLVMKLFTCFLQVLAGLA). N-linked (GlcNAc...) asparagine glycans are attached at residues Asn29 and Asn30. 3 cysteine pairs are disulfide-bonded: Cys48/Cys90, Cys79/Cys125, and Cys83/Cys127. N-linked (GlcNAc...) asparagine glycosylation is present at Asn97. The disordered stretch occupies residues 136 to 158 (AERRKTKGKRKRSRNSQTEEPHP). A compositionally biased stretch (basic residues) spans 137–149 (ERRKTKGKRKRSR).

The protein belongs to the PDGF/VEGF growth factor family. Antiparallel homodimer; disulfide-linked. Also found as heterodimer with VEGFA/VEGF.

Its subcellular location is the secreted. Growth factor active in angiogenesis and endothelial cell growth, stimulating their proliferation and migration. It binds to the receptor FLT1/VEGFR-1. Also promotes cell tumor growth. In Mus musculus (Mouse), this protein is Placenta growth factor (Pgf).